The chain runs to 359 residues: Putative B3 domain-containing protein At3g24850 (359 aa).

2 disordered regions span residues 92 to 111 (DSEIEDPQTSDSQMKTLQNS) and 159 to 192 (EKMETKDPPNPLSLCLTGNTSRKRRAVEERKRTG). Polar residues predominate over residues 100–111 (TSDSQMKTLQNS). Residues 250 to 351 (FNNLLQNDFL…VLCFAMEQSS (102 aa)) constitute a DNA-binding region (TF-B3).

The protein localises to the nucleus. This Arabidopsis thaliana (Mouse-ear cress) protein is Putative B3 domain-containing protein At3g24850.